The following is a 150-amino-acid chain: MNIEVEMKVLDERMADFIPAYATEGSAGLDLRACLDEEVVLQPGETFLVPTGLAIYLANPAYTAVLLPRSGLGHKHGIVLGNLVGLIDSDYQGELKVSLWNRGSEPFTVKPFERIAQMVIVPVVQAGFKRVEEFVGSSRGEGGFGSTGSH.

Substrate-binding positions include 69–71 (RSG), Asn-82, 86–88 (LID), and Lys-96.

This sequence belongs to the dUTPase family. Requires Mg(2+) as cofactor.

It carries out the reaction dUTP + H2O = dUMP + diphosphate + H(+). It participates in pyrimidine metabolism; dUMP biosynthesis; dUMP from dCTP (dUTP route): step 2/2. This enzyme is involved in nucleotide metabolism: it produces dUMP, the immediate precursor of thymidine nucleotides and it decreases the intracellular concentration of dUTP so that uracil cannot be incorporated into DNA. This is Deoxyuridine 5'-triphosphate nucleotidohydrolase from Neisseria gonorrhoeae (strain NCCP11945).